The primary structure comprises 3164 residues: Genome polyprotein (3164 aa).

Positions Lys219–Phe362 constitute a Peptidase S30 domain. Catalysis depends on for P1 proteinase activity residues His270, Asp279, and Ser313. The short motif at Lys414–Cys417 is the Involved in interaction with stylet and aphid transmission element. The short motif at Pro672–Lys674 is the Involved in virions binding and aphid transmission element. The 123-residue stretch at Met698–Gly820 folds into the Peptidase C6 domain. Active-site for helper component proteinase activity residues include Cys706 and His779. The 153-residue stretch at Lys1300 to Glu1452 folds into the Helicase ATP-binding domain. Gly1313 to Ser1320 is a binding site for ATP. The DEAH box signature appears at Asp1402–His1405. Positions Asp1471–Ser1630 constitute a Helicase C-terminal domain. Topologically, residues Asn1872 to Thr1889 are cytoplasmic. The helical transmembrane segment at Leu1890–Ile1910 threads the bilayer. At Gln1911 to Glu1924 the chain is on the lumenal side. Residues Lys1965 to Arg1972 carry the Nuclear localization signal motif. At Tyr1987 the chain carries O-(5'-phospho-RNA)-tyrosine. One can recognise a Peptidase C4 domain in the interval Ser2117–Ala2335. Residues His2162, Asp2197, and Cys2267 each act as for nuclear inclusion protein A activity in the active site. A RdRp catalytic domain is found at Trp2601 to Leu2725. The tract at residues Gly2884 to Thr2935 is disordered. Positions Asp2887–Val2931 are enriched in basic and acidic residues. Residue Thr3147 is modified to Phosphothreonine.

The protein belongs to the potyviridae genome polyprotein family. As to quaternary structure, interacts with host eIF4E protein (via cap-binding region); this interaction mediates the translation of the VPg-viral RNA conjugates. Part of a complex that comprises VPg, RNA, host EIF4E and EIF4G; this interaction mediates the translation of the VPg-viral RNA conjugates. Interacts, via N-terminal region, with host Sec24a protein in COPII-coated vesicles. This binding triggers the formation of host endoplasmic reticulum (ER)-derived viral vesicles involved in cell-to-cell viral movement. VPg is uridylylated by the polymerase and is covalently attached to the 5'-end of the genomic RNA. This uridylylated form acts as a nucleotide-peptide primer for the polymerase. Post-translationally, potyviral RNA is expressed as two polyproteins which undergo post-translational proteolytic processing. Genome polyprotein is processed by NIa-pro, P1 and HC-pro proteinases resulting in the production of at least ten individual proteins. P3N-PIPO polyprotein is cleaved by P1 and HC-pro proteinases resulting in the production of three individual proteins. The P1 proteinase and the HC-pro cleave only their respective C-termini autocatalytically. 6K1 is essential for proper proteolytic separation of P3 from CI.

The protein resides in the host cytoplasm. Its subcellular location is the host nucleus. It is found in the host cytoplasmic vesicle. It localises to the host membrane. The protein localises to the virion. The enzyme catalyses RNA(n) + a ribonucleoside 5'-triphosphate = RNA(n+1) + diphosphate. It carries out the reaction Hydrolyzes glutaminyl bonds, and activity is further restricted by preferences for the amino acids in P6 - P1' that vary with the species of potyvirus, e.g. Glu-Xaa-Xaa-Tyr-Xaa-Gln-|-(Ser or Gly) for the enzyme from tobacco etch virus. The natural substrate is the viral polyprotein, but other proteins and oligopeptides containing the appropriate consensus sequence are also cleaved.. It catalyses the reaction Hydrolyzes a Gly-|-Gly bond at its own C-terminus, commonly in the sequence -Tyr-Xaa-Val-Gly-|-Gly, in the processing of the potyviral polyprotein.. Functionally, cysteine protease that cleaves a Gly-Gly dipeptide at its own C-terminus. Required for aphid transmission and also has proteolytic activity. Interacts with virions and aphid stylets. Acts as a suppressor of RNA-mediated gene silencing, also known as post-transcriptional gene silencing (PTGS), a mechanism of plant viral defense that limits the accumulation of viral RNAs. May have RNA-binding activity. Has helicase activity. It may be involved in replication. In terms of biological role, indispensable for virus replication. Reduces the abundance of host transcripts related to jasmonic acid biosynthesis therefore altering the host defenses. In order to increase its own stability, decreases host protein degradation pathways. Its function is as follows. Responsible for the formation of peripheral motile host endoplasmic reticulum (ER)-derived viral vesicles called 'viral factories', seat of the viral RNA (vRNA) replication and carrying vRNA to plasmodesmata for delivery into adjacent non-infected cells; this process relies on host Sec24a-binding. Functionally, mediates the cap-independent, EIF4E-dependent translation of viral genomic RNAs. Binds to the cap-binding site of host EIF4E and thus interferes with the host EIF4E-dependent mRNA export and translation. VPg-RNA directly binds EIF4E and is a template for transcription. Also forms trimeric complexes with EIF4E-EIF4G, which are templates for translation. Has RNA-binding and proteolytic activities. In terms of biological role, RNA-dependent RNA polymerase that ensures transcription and replication of viral RNA (vRNA). Its function is as follows. Involved in aphid transmission, cell-to-cell and systemis movement, encapsidation of the viral RNA and in the regulation of viral RNA amplification. The sequence is that of Genome polyprotein from Turnip mosaic virus (strain Japanese) (TuMV).